The following is a 311-amino-acid chain: MIKLLFMGTPQFSATVLKGLLDNPAYEILGVVTQPDRAVGRKKDIKVTPVKQLALEHGISIYQPEKLSGSQELIEIMGLGADGIITAAFGQFLPTILLDSVSFAINVHASLLPKYRGGAPIHYAIMNGDKEAGVTIMEMIKEMDAGDMVAKASTPILETDNVGTLFEKLAIIGRDLLLDSLPAYLSGELKPIPQDHSQATFSPNISPEHEKLDWTMSNQEVFNHIRGMNPWPVAHTFLEGQRLKIYEAQLAEGEGLPGQVIVKTKKSLVIATGQGALSLIVVQPAGKPKMSIIDFLNGIGRKLEVGDIIGR.

Residue 110 to 113 (SLLP) coordinates (6S)-5,6,7,8-tetrahydrofolate.

The protein belongs to the Fmt family.

It carries out the reaction L-methionyl-tRNA(fMet) + (6R)-10-formyltetrahydrofolate = N-formyl-L-methionyl-tRNA(fMet) + (6S)-5,6,7,8-tetrahydrofolate + H(+). Attaches a formyl group to the free amino group of methionyl-tRNA(fMet). The formyl group appears to play a dual role in the initiator identity of N-formylmethionyl-tRNA by promoting its recognition by IF2 and preventing the misappropriation of this tRNA by the elongation apparatus. This Streptococcus pyogenes serotype M49 (strain NZ131) protein is Methionyl-tRNA formyltransferase.